Consider the following 346-residue polypeptide: D-alanine--D-alanine ligase (346 aa).

The region spanning 134–340 (KFLAESLGVK…IDYTYIHSIQ (207 aa)) is the ATP-grasp domain. Position 161–212 (161–212 (EYPVIIKPVRLGSSIGVSIVKSEAELDYALDVAFEFDNDVIVEPFIDGVKEF)) interacts with ATP. Mg(2+) contacts are provided by Asp-284, Glu-296, and Asn-298.

Belongs to the D-alanine--D-alanine ligase family. It depends on Mg(2+) as a cofactor. Requires Mn(2+) as cofactor.

Its subcellular location is the cytoplasm. The enzyme catalyses 2 D-alanine + ATP = D-alanyl-D-alanine + ADP + phosphate + H(+). It participates in cell wall biogenesis; peptidoglycan biosynthesis. In terms of biological role, cell wall formation. In Sulfurovum sp. (strain NBC37-1), this protein is D-alanine--D-alanine ligase.